A 200-amino-acid polypeptide reads, in one-letter code: Dephospho-CoA kinase (200 aa).

Residues 4-200 (VIGLTGGIAS…AILKKWNIID (197 aa)) form the DPCK domain. 12–17 (ASGKST) is a binding site for ATP.

Belongs to the CoaE family.

Its subcellular location is the cytoplasm. It catalyses the reaction 3'-dephospho-CoA + ATP = ADP + CoA + H(+). The protein operates within cofactor biosynthesis; coenzyme A biosynthesis; CoA from (R)-pantothenate: step 5/5. Catalyzes the phosphorylation of the 3'-hydroxyl group of dephosphocoenzyme A to form coenzyme A. The sequence is that of Dephospho-CoA kinase from Bacillus anthracis.